Here is a 429-residue protein sequence, read N- to C-terminus: Enolase (429 aa).

Q162 is a binding site for (2R)-2-phosphoglycerate. Residue E204 is the Proton donor of the active site. Mg(2+) contacts are provided by D241, E283, and D310. Residues K335, R364, S365, and K386 each coordinate (2R)-2-phosphoglycerate. The active-site Proton acceptor is K335.

The protein belongs to the enolase family. The cofactor is Mg(2+).

It localises to the cytoplasm. The protein localises to the secreted. The protein resides in the cell surface. It catalyses the reaction (2R)-2-phosphoglycerate = phosphoenolpyruvate + H2O. It functions in the pathway carbohydrate degradation; glycolysis; pyruvate from D-glyceraldehyde 3-phosphate: step 4/5. In terms of biological role, catalyzes the reversible conversion of 2-phosphoglycerate (2-PG) into phosphoenolpyruvate (PEP). It is essential for the degradation of carbohydrates via glycolysis. The chain is Enolase from Mycolicibacterium gilvum (strain PYR-GCK) (Mycobacterium gilvum (strain PYR-GCK)).